Reading from the N-terminus, the 558-residue chain is Hepatocyte nuclear factor 1-beta (558 aa).

Residues 1–31 (MVSKLTSLQQELLSALLSSGVTKEVLIQALE) form a dimerization region. Positions 1 to 32 (MVSKLTSLQQELLSALLSSGVTKEVLIQALEE) constitute an HNF-p1 domain. Phosphoserine is present on residues S49, S52, S75, and S80. Residues 66-85 (TNGHAKGRLSGDEGSEDGDD) are disordered. A POU-specific atypical domain is found at 93–188 (KELQALNTEE…ILRQFNQTVQ (96 aa)). Residues 231 to 311 (MRRNRFKWGP…NRRKEEAFRQ (81 aa)) constitute a DNA-binding region (homeobox; HNF1-type). Residues 323–348 (THNLNPLLTHGSPHHQPSSSPPNKMS) are disordered.

It belongs to the HNF1 homeobox family. Binds DNA as a dimer. Can form homodimer or heterodimer with HNF1-alpha. Interacts (via HNF-p1 domain) with PCBD1; the interaction increases its transactivation activity.

It is found in the nucleus. In terms of biological role, transcription factor that binds to the inverted palindrome 5'-GTTAATNATTAAC-3'. Binds to the FPC element in the cAMP regulatory unit of the PLAU gene. Transcriptional activity is increased by coactivator PCBD1. This is Hepatocyte nuclear factor 1-beta (Hnf1b) from Mus musculus (Mouse).